A 338-amino-acid chain; its full sequence is Tetraacyldisaccharide 4'-kinase (338 aa).

Residue 67–74 (IAGGAGKT) coordinates ATP.

The protein belongs to the LpxK family.

It catalyses the reaction a lipid A disaccharide + ATP = a lipid IVA + ADP + H(+). It participates in glycolipid biosynthesis; lipid IV(A) biosynthesis; lipid IV(A) from (3R)-3-hydroxytetradecanoyl-[acyl-carrier-protein] and UDP-N-acetyl-alpha-D-glucosamine: step 6/6. Functionally, transfers the gamma-phosphate of ATP to the 4'-position of a tetraacyldisaccharide 1-phosphate intermediate (termed DS-1-P) to form tetraacyldisaccharide 1,4'-bis-phosphate (lipid IVA). This Acidovorax ebreus (strain TPSY) (Diaphorobacter sp. (strain TPSY)) protein is Tetraacyldisaccharide 4'-kinase.